We begin with the raw amino-acid sequence, 300 residues long: 5'-adenylylsulfate reductase-like 5 (300 aa).

Residues 1 to 23 form the signal peptide; that stretch reads MDSRVSILFVCAIAVSCFTSGSA. Residues 41-161 form the Thioredoxin domain; that stretch reads FDLEAKCPPS…LIEFYEEATG (121 aa). Residue asparagine 136 is glycosylated (N-linked (GlcNAc...) asparagine). The helical transmembrane segment at 202-222 threads the bilayer; that stretch reads FLVLSLLFICLQMAILVFPIA.

It is found in the membrane. In Arabidopsis thaliana (Mouse-ear cress), this protein is 5'-adenylylsulfate reductase-like 5 (APRL5).